The sequence spans 239 residues: Leucine rich adaptor protein 1 (239 aa).

LRR repeat units follow at residues 55-83 and 93-114; these read LGDK…LVTL and LLEE…QYSL. The segment covering 105 to 116 has biased composition (low complexity); that stretch reads SSLTSSQYSLTG. Positions 105–138 are disordered; the sequence is SSLTSSQYSLTGGSPGRSRRGSWDSLPDTSSTDR. A phosphoserine mark is found at serine 118, serine 126, and serine 129.

Forms a tripartite complex with CDC42BPA/CDC42BPB and MYO18A acting as an adapter connecting both. Its binding to CDC42BPA/CDC42BPB results in their activation by abolition of their negative autoregulation. Interacts with CDC42BPA and CDC42BPB. In terms of processing, phosphorylated.

The protein localises to the cytoplasm. In terms of biological role, acts as an activator of the canonical NF-kappa-B pathway and drive the production of pro-inflammatory cytokines. Promotes the antigen (Ag)-presenting and priming function of dendritic cells via the canonical NF-kappa-B pathway. In concert with MYO18A and CDC42BPA/CDC42BPB, is involved in modulating lamellar actomyosin retrograde flow that is crucial to cell protrusion and migration. Activates CDC42BPA/CDC42BPB and targets it to actomyosin through its interaction with MYO18A, leading to MYL9/MLC2 phosphorylation and MYH9/MYH10-dependent actomyosin assembly in the lamella. The protein is Leucine rich adaptor protein 1 (Lurap1) of Mus musculus (Mouse).